The primary structure comprises 767 residues: Dipeptidyl peptidase 4 (767 aa).

Over Met1–Lys6 the chain is Cytoplasmic. A helical; Signal-anchor for type II membrane protein transmembrane segment spans residues Val7–Leu28. Over Asn29–Arg767 the chain is Extracellular. Asn83, Asn90, Asn148, Asn217, Asn227, and Asn319 each carry an N-linked (GlcNAc...) asparagine glycan. Disulfide bonds link Cys326/Cys337, Cys383/Cys395, Cys445/Cys448, and Cys455/Cys473. An N-linked (GlcNAc...) asparagine glycan is attached at Asn521. The active-site Charge relay system is the Ser631. Residues Cys650 and Cys763 are joined by a disulfide bond. A glycan (N-linked (GlcNAc...) asparagine) is linked at Asn686. Active-site charge relay system residues include Asp709 and His741.

It belongs to the peptidase S9B family. DPPIV subfamily. As to quaternary structure, monomer. Homodimer. Heterodimer with Seprase (FAP). Requires homodimerization for optimal dipeptidyl peptidase activity and T-cell costimulation. Found in a membrane raft complex, at least composed of BCL10, CARD11, DPP4 and IKBKB. Associates with collagen. Interacts with PTPRC; the interaction is enhanced in an interleukin-12-dependent manner in activated lymphocytes. Interacts (via extracellular domain) with ADA; does not inhibit its dipeptidyl peptidase activity. Interacts with CAV1 (via the N-terminus); the interaction is direct. Interacts (via cytoplasmic tail) with CARD11 (via PDZ domain); its homodimerization is necessary for interaction with CARD11. Interacts with IGF2R; the interaction is direct. Interacts with GPC3. Post-translationally, the soluble form (Dipeptidyl peptidase 4 soluble form also named SDPP) derives from the membrane form (Dipeptidyl peptidase 4 membrane form also named MDPP) by proteolytic processing. N- and O-Glycosylated. In terms of processing, phosphorylated. Mannose 6-phosphate residues in the carbohydrate moiety are necessary for interaction with IGF2R in activated T-cells. Mannose 6-phosphorylation is induced during T-cell activation. In terms of tissue distribution, expressed in bile ducts and other epithelial brush borders (small intestine, kidney, colon, pancreatic duct); acinar structures in salivary glands; endothelial structures and T cell areas in thymus, spleen and lymph node.

It localises to the secreted. The protein localises to the cell membrane. It is found in the apical cell membrane. Its subcellular location is the cell projection. The protein resides in the invadopodium membrane. It localises to the lamellipodium membrane. The protein localises to the cell junction. It is found in the membrane raft. The catalysed reaction is Release of an N-terminal dipeptide, Xaa-Yaa-|-Zaa-, from a polypeptide, preferentially when Yaa is Pro, provided Zaa is neither Pro nor hydroxyproline.. Inhibited by GPC3 and diprotin A. Functionally, cell surface glycoprotein receptor involved in the costimulatory signal essential for T-cell receptor (TCR)-mediated T-cell activation. Acts as a positive regulator of T-cell coactivation, by binding at least ADA, CAV1, IGF2R, and PTPRC. Its binding to CAV1 and CARD11 induces T-cell proliferation and NF-kappa-B activation in a T-cell receptor/CD3-dependent manner. Its interaction with ADA also regulates lymphocyte-epithelial cell adhesion. In association with FAP is involved in the pericellular proteolysis of the extracellular matrix (ECM), the migration and invasion of endothelial cells into the ECM. May be involved in the promotion of lymphatic endothelial cells adhesion, migration and tube formation. When overexpressed, enhanced cell proliferation, a process inhibited by GPC3. Also acts as a serine exopeptidase with a dipeptidyl peptidase activity that regulates various physiological processes by cleaving peptides in the circulation, including many chemokines, mitogenic growth factors, neuropeptides and peptide hormones. Removes N-terminal dipeptides sequentially from polypeptides having unsubstituted N-termini provided that the penultimate residue is proline. The chain is Dipeptidyl peptidase 4 (Dpp4) from Rattus norvegicus (Rat).